The chain runs to 455 residues: Bifunctional protein GlmU (455 aa).

The tract at residues 1 to 226 is pyrophosphorylase; it reads MSLDIVILAA…AMEVQGANDR (226 aa). UDP-N-acetyl-alpha-D-glucosamine is bound by residues 8 to 11, K22, Q73, 78 to 79, 99 to 101, G136, E151, N166, and N224; these read LAAG, GT, and YGD. D101 contributes to the Mg(2+) binding site. A Mg(2+)-binding site is contributed by N224. The segment at 227–247 is linker; it reads KQLSELERHYQMREARRLMAA. An N-acetyltransferase region spans residues 248–455; the sequence is GVTLRDPARF…WKRPVKISKD (208 aa). Residues R330 and K348 each contribute to the UDP-N-acetyl-alpha-D-glucosamine site. Residue H360 is the Proton acceptor of the active site. UDP-N-acetyl-alpha-D-glucosamine-binding residues include Y363 and N374. Residues A377, 383–384, S402, A420, and R437 contribute to the acetyl-CoA site; that span reads NY.

It in the N-terminal section; belongs to the N-acetylglucosamine-1-phosphate uridyltransferase family. This sequence in the C-terminal section; belongs to the transferase hexapeptide repeat family. In terms of assembly, homotrimer. The cofactor is Mg(2+).

Its subcellular location is the cytoplasm. It catalyses the reaction alpha-D-glucosamine 1-phosphate + acetyl-CoA = N-acetyl-alpha-D-glucosamine 1-phosphate + CoA + H(+). The catalysed reaction is N-acetyl-alpha-D-glucosamine 1-phosphate + UTP + H(+) = UDP-N-acetyl-alpha-D-glucosamine + diphosphate. The protein operates within nucleotide-sugar biosynthesis; UDP-N-acetyl-alpha-D-glucosamine biosynthesis; N-acetyl-alpha-D-glucosamine 1-phosphate from alpha-D-glucosamine 6-phosphate (route II): step 2/2. Its pathway is nucleotide-sugar biosynthesis; UDP-N-acetyl-alpha-D-glucosamine biosynthesis; UDP-N-acetyl-alpha-D-glucosamine from N-acetyl-alpha-D-glucosamine 1-phosphate: step 1/1. It participates in bacterial outer membrane biogenesis; LPS lipid A biosynthesis. Functionally, catalyzes the last two sequential reactions in the de novo biosynthetic pathway for UDP-N-acetylglucosamine (UDP-GlcNAc). The C-terminal domain catalyzes the transfer of acetyl group from acetyl coenzyme A to glucosamine-1-phosphate (GlcN-1-P) to produce N-acetylglucosamine-1-phosphate (GlcNAc-1-P), which is converted into UDP-GlcNAc by the transfer of uridine 5-monophosphate (from uridine 5-triphosphate), a reaction catalyzed by the N-terminal domain. The sequence is that of Bifunctional protein GlmU from Pseudomonas syringae pv. syringae (strain B728a).